We begin with the raw amino-acid sequence, 247 residues long: DNA polymerase sliding clamp (247 aa).

The protein belongs to the PCNA family. Homotrimer. The subunits circularize to form a toroid; DNA passes through its center. Replication factor C (RFC) is required to load the toroid on the DNA.

Functionally, sliding clamp subunit that acts as a moving platform for DNA processing. Responsible for tethering the catalytic subunit of DNA polymerase and other proteins to DNA during high-speed replication. The chain is DNA polymerase sliding clamp from Methanoculleus marisnigri (strain ATCC 35101 / DSM 1498 / JR1).